Reading from the N-terminus, the 310-residue chain is D-erythrulose 1-phosphate 3-epimerase (310 aa).

It catalyses the reaction D-erythrulose 1-phosphate = L-erythrulose 1-phosphate. It functions in the pathway carbohydrate metabolism; erythritol degradation. Catalyzes the racemization of D-erythrulose 1-phosphate to L-erythrulose 1-phosphate. The polypeptide is D-erythrulose 1-phosphate 3-epimerase (Brucella abortus (strain 2308)).